The primary structure comprises 1363 residues: DNA-directed RNA polymerase subunit beta (1363 aa).

Belongs to the RNA polymerase beta chain family. The RNAP catalytic core consists of 2 alpha, 1 beta, 1 beta' and 1 omega subunit. When a sigma factor is associated with the core the holoenzyme is formed, which can initiate transcription.

It catalyses the reaction RNA(n) + a ribonucleoside 5'-triphosphate = RNA(n+1) + diphosphate. Its function is as follows. DNA-dependent RNA polymerase catalyzes the transcription of DNA into RNA using the four ribonucleoside triphosphates as substrates. In Syntrophus aciditrophicus (strain SB), this protein is DNA-directed RNA polymerase subunit beta.